Reading from the N-terminus, the 104-residue chain is Urease subunit gamma (104 aa).

The protein belongs to the urease gamma subunit family. In terms of assembly, heterotrimer of UreA (gamma), UreB (beta) and UreC (alpha) subunits. Three heterotrimers associate to form the active enzyme.

The protein localises to the cytoplasm. The catalysed reaction is urea + 2 H2O + H(+) = hydrogencarbonate + 2 NH4(+). It participates in nitrogen metabolism; urea degradation; CO(2) and NH(3) from urea (urease route): step 1/1. This is Urease subunit gamma from Actinomyces naeslundii.